We begin with the raw amino-acid sequence, 378 residues long: Neutral protease 2 homolog ARB_04336 (378 aa).

An N-terminal signal peptide occupies residues 1-19 (MKFFTALAAVGALLAPAVA). The propeptide occupies 20–186 (LPTPASEASH…DYFSKGLDKR (167 aa)). Disulfide bonds link C192-C262 and C269-C287. H311 is a binding site for Zn(2+). E312 is a catalytic residue. Residues H315 and D326 each coordinate Zn(2+).

Belongs to the peptidase M35 family. Requires Zn(2+) as cofactor.

Its subcellular location is the secreted. The catalysed reaction is Preferential cleavage of bonds with hydrophobic residues in P1'. Also 3-Asn-|-Gln-4 and 8-Gly-|-Ser-9 bonds in insulin B chain.. Functionally, secreted metalloproteinase that allows assimilation of proteinaceous substrates. Shows high activities on basic nuclear substrates such as histone and protamine. May be involved in virulence. In Arthroderma benhamiae (strain ATCC MYA-4681 / CBS 112371) (Trichophyton mentagrophytes), this protein is Neutral protease 2 homolog ARB_04336.